Reading from the N-terminus, the 227-residue chain is Cytochrome c oxidase subunit 2 (227 aa).

Residues Met1–Ser14 are Mitochondrial intermembrane-facing. The chain crosses the membrane as a helical span at residues Pro15–Met45. Over Leu46 to Gln59 the chain is Mitochondrial matrix. A helical transmembrane segment spans residues Glu60 to Met87. Residues Asp88–Leu227 are Mitochondrial intermembrane-facing. His161, Cys196, Glu198, Cys200, His204, and Met207 together coordinate Cu cation. Glu198 is a Mg(2+) binding site.

It belongs to the cytochrome c oxidase subunit 2 family. As to quaternary structure, component of the cytochrome c oxidase (complex IV, CIV), a multisubunit enzyme composed of 14 subunits. The complex is composed of a catalytic core of 3 subunits MT-CO1, MT-CO2 and MT-CO3, encoded in the mitochondrial DNA, and 11 supernumerary subunits COX4I, COX5A, COX5B, COX6A, COX6B, COX6C, COX7A, COX7B, COX7C, COX8 and NDUFA4, which are encoded in the nuclear genome. The complex exists as a monomer or a dimer and forms supercomplexes (SCs) in the inner mitochondrial membrane with NADH-ubiquinone oxidoreductase (complex I, CI) and ubiquinol-cytochrome c oxidoreductase (cytochrome b-c1 complex, complex III, CIII), resulting in different assemblies (supercomplex SCI(1)III(2)IV(1) and megacomplex MCI(2)III(2)IV(2)). Found in a complex with TMEM177, COA6, COX18, COX20, SCO1 and SCO2. Interacts with TMEM177 in a COX20-dependent manner. Interacts with COX20. Interacts with COX16. The cofactor is Cu cation.

The protein localises to the mitochondrion inner membrane. The enzyme catalyses 4 Fe(II)-[cytochrome c] + O2 + 8 H(+)(in) = 4 Fe(III)-[cytochrome c] + 2 H2O + 4 H(+)(out). Its function is as follows. Component of the cytochrome c oxidase, the last enzyme in the mitochondrial electron transport chain which drives oxidative phosphorylation. The respiratory chain contains 3 multisubunit complexes succinate dehydrogenase (complex II, CII), ubiquinol-cytochrome c oxidoreductase (cytochrome b-c1 complex, complex III, CIII) and cytochrome c oxidase (complex IV, CIV), that cooperate to transfer electrons derived from NADH and succinate to molecular oxygen, creating an electrochemical gradient over the inner membrane that drives transmembrane transport and the ATP synthase. Cytochrome c oxidase is the component of the respiratory chain that catalyzes the reduction of oxygen to water. Electrons originating from reduced cytochrome c in the intermembrane space (IMS) are transferred via the dinuclear copper A center (CU(A)) of subunit 2 and heme A of subunit 1 to the active site in subunit 1, a binuclear center (BNC) formed by heme A3 and copper B (CU(B)). The BNC reduces molecular oxygen to 2 water molecules using 4 electrons from cytochrome c in the IMS and 4 protons from the mitochondrial matrix. This Tamias townsendii (Townsend's chipmunk) protein is Cytochrome c oxidase subunit 2 (MT-CO2).